A 515-amino-acid polypeptide reads, in one-letter code: Maturase K (515 aa).

Belongs to the intron maturase 2 family. MatK subfamily.

It is found in the plastid. The protein localises to the chloroplast. Its function is as follows. Usually encoded in the trnK tRNA gene intron. Probably assists in splicing its own and other chloroplast group II introns. The polypeptide is Maturase K (Pseudotsuga menziesii (Douglas-fir)).